Here is a 497-residue protein sequence, read N- to C-terminus: Guanosine-5'-triphosphate,3'-diphosphate pyrophosphatase (497 aa).

The protein belongs to the GppA/Ppx family. GppA subfamily.

The catalysed reaction is guanosine 3'-diphosphate 5'-triphosphate + H2O = guanosine 3',5'-bis(diphosphate) + phosphate + H(+). It functions in the pathway purine metabolism; ppGpp biosynthesis; ppGpp from GTP: step 2/2. Functionally, catalyzes the conversion of pppGpp to ppGpp. Guanosine pentaphosphate (pppGpp) is a cytoplasmic signaling molecule which together with ppGpp controls the 'stringent response', an adaptive process that allows bacteria to respond to amino acid starvation, resulting in the coordinated regulation of numerous cellular activities. The protein is Guanosine-5'-triphosphate,3'-diphosphate pyrophosphatase of Vibrio cholerae serotype O1 (strain ATCC 39541 / Classical Ogawa 395 / O395).